The following is a 458-amino-acid chain: MKKDFNEFKEFIVGKKVGVVGIGVSNIPLINFLIDLGAAVTAFDKKNLEELGDVADGFNKKGVKLELGEKYLDNLKGFDVIFKTPSMRIDSEALVRARKEGAYVTSEMEEFVRYTRGKVYGITGSDGKTTTTTIISKLLEGQGYKTWVGGNIGTPLFSEIENIHDEDKVVLELSSFQLMTMTQEIDVAVCTNLSPNHLDMHKSMQEYIDAKKNIFIYQNSNGLLVVNRENEITHGFIKEAKGNVKEFSSKRELIDGAYYKNGILYLEDKEVCKKDDIVIKGMHNVENYLAAFLATKDDVSVEVMKKVAETFAGVEHRCELVREIDGVKYYNDSIASSPTRTLAGLRAFDEKVIVIAGGYDKNIPFEPLAYEGYPYIKELILMGATKHKIKDVFDNLENEKGIKININMVESLEEAVRLAESIANQGDIVTLSPACASFDMYPNFMIRGNKFKEIVKSL.

124–130 (GSDGKTT) provides a ligand contact to ATP.

It belongs to the MurCDEF family.

The protein resides in the cytoplasm. The enzyme catalyses UDP-N-acetyl-alpha-D-muramoyl-L-alanine + D-glutamate + ATP = UDP-N-acetyl-alpha-D-muramoyl-L-alanyl-D-glutamate + ADP + phosphate + H(+). It participates in cell wall biogenesis; peptidoglycan biosynthesis. Its function is as follows. Cell wall formation. Catalyzes the addition of glutamate to the nucleotide precursor UDP-N-acetylmuramoyl-L-alanine (UMA). The sequence is that of UDP-N-acetylmuramoylalanine--D-glutamate ligase from Clostridium beijerinckii (strain ATCC 51743 / NCIMB 8052) (Clostridium acetobutylicum).